The chain runs to 307 residues: Voltage-dependent anion channel-forming protein alr2987 (307 aa).

Helical transmembrane passes span 19–39 (VIGAIYKRVICCALFGVLVTL), 47–67 (VSQPILGSVIPSIVLGLLLVF), 209–229 (PLAYSIHLKQLLLLYCFLLPF), and 238–258 (WTGLVVGLVSFTLFGIEAIGL).

This sequence belongs to the anion channel-forming bestrophin (TC 1.A.46) family.

Its subcellular location is the cell membrane. This chain is Voltage-dependent anion channel-forming protein alr2987, found in Nostoc sp. (strain PCC 7120 / SAG 25.82 / UTEX 2576).